We begin with the raw amino-acid sequence, 243 residues long: Uridylate kinase (243 aa).

15–18 (KLSG) is an ATP binding site. The segment at 23–28 (GSEGFG) is involved in allosteric activation by GTP. Gly57 is a binding site for UMP. ATP is bound by residues Gly58 and Arg62. Residues Asp77 and 138–145 (TGNPFFTT) contribute to the UMP site. Residues Thr165, Tyr171, and Asp174 each coordinate ATP.

It belongs to the UMP kinase family. As to quaternary structure, homohexamer.

The protein localises to the cytoplasm. It carries out the reaction UMP + ATP = UDP + ADP. It participates in pyrimidine metabolism; CTP biosynthesis via de novo pathway; UDP from UMP (UMPK route): step 1/1. Allosterically activated by GTP. Inhibited by UTP. In terms of biological role, catalyzes the reversible phosphorylation of UMP to UDP. This Vibrio cholerae serotype O1 (strain ATCC 39541 / Classical Ogawa 395 / O395) protein is Uridylate kinase.